A 322-amino-acid polypeptide reads, in one-letter code: Phosphatidylserine decarboxylase proenzyme (322 aa).

Catalysis depends on charge relay system; for autoendoproteolytic cleavage activity residues aspartate 90, histidine 147, and serine 254. Residue serine 254 is the Schiff-base intermediate with substrate; via pyruvic acid; for decarboxylase activity of the active site. Serine 254 carries the post-translational modification Pyruvic acid (Ser); by autocatalysis. The tract at residues 295-322 is disordered; sequence VEPAPLPTEEIKAEHDASPLVDNKKDDT. Residues 303-322 show a composition bias toward basic and acidic residues; the sequence is EEIKAEHDASPLVDNKKDDT.

The protein belongs to the phosphatidylserine decarboxylase family. PSD-B subfamily. Prokaryotic type I sub-subfamily. As to quaternary structure, heterodimer of a large membrane-associated beta subunit and a small pyruvoyl-containing alpha subunit. It depends on pyruvate as a cofactor. In terms of processing, is synthesized initially as an inactive proenzyme. Formation of the active enzyme involves a self-maturation process in which the active site pyruvoyl group is generated from an internal serine residue via an autocatalytic post-translational modification. Two non-identical subunits are generated from the proenzyme in this reaction, and the pyruvate is formed at the N-terminus of the alpha chain, which is derived from the carboxyl end of the proenzyme. The autoendoproteolytic cleavage occurs by a canonical serine protease mechanism, in which the side chain hydroxyl group of the serine supplies its oxygen atom to form the C-terminus of the beta chain, while the remainder of the serine residue undergoes an oxidative deamination to produce ammonia and the pyruvoyl prosthetic group on the alpha chain. During this reaction, the Ser that is part of the protease active site of the proenzyme becomes the pyruvoyl prosthetic group, which constitutes an essential element of the active site of the mature decarboxylase.

Its subcellular location is the cell membrane. The enzyme catalyses a 1,2-diacyl-sn-glycero-3-phospho-L-serine + H(+) = a 1,2-diacyl-sn-glycero-3-phosphoethanolamine + CO2. It participates in phospholipid metabolism; phosphatidylethanolamine biosynthesis; phosphatidylethanolamine from CDP-diacylglycerol: step 2/2. Functionally, catalyzes the formation of phosphatidylethanolamine (PtdEtn) from phosphatidylserine (PtdSer). The chain is Phosphatidylserine decarboxylase proenzyme from Salmonella agona (strain SL483).